A 151-amino-acid polypeptide reads, in one-letter code: Ribosome maturation factor RimP (151 aa).

This sequence belongs to the RimP family.

The protein resides in the cytoplasm. Functionally, required for maturation of 30S ribosomal subunits. This chain is Ribosome maturation factor RimP, found in Colwellia psychrerythraea (strain 34H / ATCC BAA-681) (Vibrio psychroerythus).